Here is a 245-residue protein sequence, read N- to C-terminus: Putative [LysW]-aminoadipate/[LysW]-glutamate kinase (245 aa).

Substrate is bound by residues R60 and N162.

This sequence belongs to the acetylglutamate kinase family. LysZ subfamily.

The protein localises to the cytoplasm. It catalyses the reaction [amino-group carrier protein]-C-terminal-N-(1,4-dicarboxybutan-1-yl)-L-glutamine + ATP = [amino-group carrier protein]-C-terminal-N-(1-carboxy-5-phosphooxy-5-oxopentan-1-yl)-L-glutamine + ADP. The enzyme catalyses [amino-group carrier protein]-C-terminal-gamma-(L-glutamyl)-L-glutamate + ATP = [amino-group carrier protein]-C-terminal-gamma-(5-phospho-L-glutamyl)-L-glutamate + ADP. The protein operates within amino-acid biosynthesis; L-lysine biosynthesis via AAA pathway; L-lysine from L-alpha-aminoadipate (Thermus route): step 2/5. It participates in amino-acid biosynthesis; L-arginine biosynthesis. Functionally, involved in both the arginine and lysine biosynthetic pathways. Phosphorylates the LysW-bound precursors glutamate (for arginine biosynthesis), respectively alpha-aminoadipate (for lysine biosynthesis). The sequence is that of Putative [LysW]-aminoadipate/[LysW]-glutamate kinase from Pyrococcus abyssi (strain GE5 / Orsay).